Here is a 486-residue protein sequence, read N- to C-terminus: Probable peptidoglycan glycosyltransferase FtsW (486 aa).

The Cytoplasmic portion of the chain corresponds to 1–50; the sequence is MAGAARDRAFLDHFGGAGADRPCHVEGALMNDMSRQATRLDAIGGRYDPW. Residues 51–71 form a helical membrane-spanning segment; that stretch reads LLGAAVTLASLGVVMVASSSI. At 72 to 77 the chain is on the periplasmic side; sequence ELEASP. A helical membrane pass occupies residues 78 to 98; the sequence is FYYLTRHLLFLGGGIALAFWA. The Cytoplasmic segment spans residues 99–112; sequence MRTELKTIEQHNQM. A helical transmembrane segment spans residues 113–133; it reads LLLACFVLLVVVFVPGLGSTV. The Periplasmic segment spans residues 134–141; that stretch reads NGAKRWIN. Residues 142-162 form a helical membrane-spanning segment; that stretch reads LGVSRFQVVESVKVFYIIWLA. Residues 163-174 are Cytoplasmic-facing; it reads SYLVRFRDEVNA. The chain crosses the membrane as a helical span at residues 175-195; that stretch reads TWQAMLKPVFVVGLLVGLLLL. The Periplasmic portion of the chain corresponds to 196-199; the sequence is QPDF. The chain crosses the membrane as a helical span at residues 200–220; that stretch reads GSSMLLLSVTACMLVLGGAPI. At 221–222 the chain is on the cytoplasmic side; it reads GR. A helical transmembrane segment spans residues 223–243; sequence IILPILLLLPALVALVIFEPY. Topologically, residues 244-298 are periplasmic; it reads RMRRVTSFMDPWVDQLGSGYQLSNALMAIGRGQWTGVGLGASVQKLNYLPESHTD. A helical transmembrane segment spans residues 299–319; that stretch reads FIFSVIAEELGFVGVCGVIGL. The Cytoplasmic portion of the chain corresponds to 320-342; it reads YALLVGRAFWLGMRCVEMKRHFS. The chain crosses the membrane as a helical span at residues 343 to 363; the sequence is GYIAFGIGLWIAMQSFVSIGV. The Periplasmic portion of the chain corresponds to 364 to 374; it reads NLGILPTKGLT. The helical transmembrane segment at 375–395 threads the bilayer; it reads LPLISSGGSSVLMTCLAMGVL. Residues 396–486 lie on the Cytoplasmic side of the membrane; that stretch reads LRVSYEADRA…RVEPTFGRIA (91 aa).

The protein belongs to the SEDS family. FtsW subfamily.

Its subcellular location is the cell inner membrane. It catalyses the reaction [GlcNAc-(1-&gt;4)-Mur2Ac(oyl-L-Ala-gamma-D-Glu-L-Lys-D-Ala-D-Ala)](n)-di-trans,octa-cis-undecaprenyl diphosphate + beta-D-GlcNAc-(1-&gt;4)-Mur2Ac(oyl-L-Ala-gamma-D-Glu-L-Lys-D-Ala-D-Ala)-di-trans,octa-cis-undecaprenyl diphosphate = [GlcNAc-(1-&gt;4)-Mur2Ac(oyl-L-Ala-gamma-D-Glu-L-Lys-D-Ala-D-Ala)](n+1)-di-trans,octa-cis-undecaprenyl diphosphate + di-trans,octa-cis-undecaprenyl diphosphate + H(+). It participates in cell wall biogenesis; peptidoglycan biosynthesis. Its function is as follows. Peptidoglycan polymerase that is essential for cell division. This Xanthomonas oryzae pv. oryzae (strain KACC10331 / KXO85) protein is Probable peptidoglycan glycosyltransferase FtsW.